A 161-amino-acid polypeptide reads, in one-letter code: Nucleotide-binding protein Ssed_3443 (161 aa).

Belongs to the YajQ family.

In terms of biological role, nucleotide-binding protein. This chain is Nucleotide-binding protein Ssed_3443, found in Shewanella sediminis (strain HAW-EB3).